Reading from the N-terminus, the 408-residue chain is Tryptophan synthase beta chain (408 aa).

Lys-97 carries the N6-(pyridoxal phosphate)lysine modification.

It belongs to the TrpB family. In terms of assembly, tetramer of two alpha and two beta chains. Pyridoxal 5'-phosphate serves as cofactor.

The catalysed reaction is (1S,2R)-1-C-(indol-3-yl)glycerol 3-phosphate + L-serine = D-glyceraldehyde 3-phosphate + L-tryptophan + H2O. It functions in the pathway amino-acid biosynthesis; L-tryptophan biosynthesis; L-tryptophan from chorismate: step 5/5. The beta subunit is responsible for the synthesis of L-tryptophan from indole and L-serine. The polypeptide is Tryptophan synthase beta chain (trpB) (Pseudomonas syringae pv. syringae).